Here is a 154-residue protein sequence, read N- to C-terminus: Metallothiol transferase FosB (154 aa).

The VOC domain maps to 8-123 (GINHLLFSVS…DGHKFELHTG (116 aa)). Mg(2+)-binding residues include His-11, His-70, and Glu-119. Glu-119 (proton donor/acceptor) is an active-site residue.

Belongs to the fosfomycin resistance protein family. FosB subfamily. Homodimer. Mg(2+) serves as cofactor.

The protein resides in the cytoplasm. Metallothiol transferase which confers resistance to fosfomycin by catalyzing the addition of a thiol cofactor to fosfomycin. L-cysteine is probably the physiological thiol donor. This chain is Metallothiol transferase FosB, found in Bacillus licheniformis (strain ATCC 14580 / DSM 13 / JCM 2505 / CCUG 7422 / NBRC 12200 / NCIMB 9375 / NCTC 10341 / NRRL NRS-1264 / Gibson 46).